The primary structure comprises 349 residues: Cobalt-precorrin-5B C(1)-methyltransferase (349 aa).

Belongs to the CbiD family.

It carries out the reaction Co-precorrin-5B + S-adenosyl-L-methionine = Co-precorrin-6A + S-adenosyl-L-homocysteine. It functions in the pathway cofactor biosynthesis; adenosylcobalamin biosynthesis; cob(II)yrinate a,c-diamide from sirohydrochlorin (anaerobic route): step 6/10. In terms of biological role, catalyzes the methylation of C-1 in cobalt-precorrin-5B to form cobalt-precorrin-6A. The protein is Cobalt-precorrin-5B C(1)-methyltransferase of Saccharolobus islandicus (strain Y.N.15.51 / Yellowstone #2) (Sulfolobus islandicus).